We begin with the raw amino-acid sequence, 1004 residues long: Protein Wnt-5 (1004 aa).

The N-terminal stretch at 1 to 29 (MSCYRKRHFLLWLLRAVCMLHLTARGAYA) is a signal peptide. N-linked (GlcNAc...) asparagine glycans are attached at residues asparagine 60, asparagine 66, asparagine 115, and asparagine 219. The disordered stretch occupies residues 238 to 298 (QKDKAKTSGA…NPGEQPIGGY (61 aa)). N-linked (GlcNAc...) asparagine glycosylation is found at asparagine 307 and asparagine 341. Residues 310–407 (LLKPTDTDSH…ERDEWFRGQS (98 aa)) form a disordered region. Residues 389–403 (RREEQQRQRERDEWF) show a composition bias toward basic and acidic residues. Asparagine 422 is a glycosylation site (N-linked (GlcNAc...) asparagine). A disordered region spans residues 438–472 (KVSSEGSDGELLSRVERSQPSISSSSSSSSSSSRK). The segment covering 458–470 (SISSSSSSSSSSS) has biased composition (low complexity). Residues asparagine 484, asparagine 485, asparagine 528, and asparagine 593 are each glycosylated (N-linked (GlcNAc...) asparagine). Cystine bridges form between cysteine 583–cysteine 594, cysteine 633–cysteine 641, and cysteine 643–cysteine 661. An N-linked (GlcNAc...) asparagine glycan is attached at asparagine 724. The segment at 790 to 822 (FFKGEQQPRKKKRKNQRAAADAPAYPRNGIKES) is disordered. 8 disulfide bridges follow: cysteine 862/cysteine 876, cysteine 864/cysteine 871, cysteine 933/cysteine 964, cysteine 949/cysteine 959, cysteine 963/cysteine 1003, cysteine 979/cysteine 994, cysteine 981/cysteine 991, and cysteine 986/cysteine 987. Serine 868 carries the O-palmitoleoyl serine; by PORCN lipid modification. The N-linked (GlcNAc...) asparagine glycan is linked to asparagine 952.

This sequence belongs to the Wnt family. In terms of assembly, interacts with porcupine (por). Glycosylated, glycosylation is stimulated by porcupine at the ER. In terms of processing, palmitoleoylated by porcupine. The lipid group functions as a sorting signal, targeting the ligand to polarized vesicles that transport Wnt5 to unique sites at the cell surface. Depalmitoleoylated by notum, leading to inhibit Wnt signaling pathway. In terms of tissue distribution, dynamic expression pattern during embryogenesis. Expression is seen in the limb primordia of the head and thoracic segments, mesodermal and neurogenic regions.

It is found in the secreted. It localises to the extracellular space. The protein resides in the extracellular matrix. Its function is as follows. Binds as a ligand to a family of frizzled seven-transmembrane receptors and acts through a cascade of genes on the nucleus. Probable developmental protein. May be a signaling molecule which affects the development of discrete regions of tissues. Is likely to signal over only few cell diameters. May have a role in limb and CNS development; may be a downstream target of Dll that acts in the specification of these primordia. The sequence is that of Protein Wnt-5 (Wnt5) from Drosophila melanogaster (Fruit fly).